The sequence spans 332 residues: Putative ketol-acid reductoisomerase 3 (332 aa).

Positions 1 to 182 constitute a KARI N-terminal Rossmann domain; sequence MDKTVLDASL…AIPGGIAVIS (182 aa). Residues 183 to 329 form the KARI C-terminal knotted domain; sequence SFEEEALLDL…KELYKILRRK (147 aa).

It belongs to the ketol-acid reductoisomerase family.

The catalysed reaction is (2R)-2,3-dihydroxy-3-methylbutanoate + NADP(+) = (2S)-2-acetolactate + NADPH + H(+). It catalyses the reaction (2R,3R)-2,3-dihydroxy-3-methylpentanoate + NADP(+) = (S)-2-ethyl-2-hydroxy-3-oxobutanoate + NADPH + H(+). It functions in the pathway amino-acid biosynthesis; L-isoleucine biosynthesis; L-isoleucine from 2-oxobutanoate: step 2/4. The protein operates within amino-acid biosynthesis; L-valine biosynthesis; L-valine from pyruvate: step 2/4. In Saccharolobus solfataricus (strain ATCC 35092 / DSM 1617 / JCM 11322 / P2) (Sulfolobus solfataricus), this protein is Putative ketol-acid reductoisomerase 3 (ilvC3).